A 572-amino-acid polypeptide reads, in one-letter code: Formate--tetrahydrofolate ligase (572 aa).

Residue 65–72 coordinates ATP; that stretch reads TPLGEGKT.

It belongs to the formate--tetrahydrofolate ligase family.

It carries out the reaction (6S)-5,6,7,8-tetrahydrofolate + formate + ATP = (6R)-10-formyltetrahydrofolate + ADP + phosphate. It participates in one-carbon metabolism; tetrahydrofolate interconversion. This Chloroflexus aggregans (strain MD-66 / DSM 9485) protein is Formate--tetrahydrofolate ligase.